A 348-amino-acid chain; its full sequence is L-threonine 3-dehydrogenase (348 aa).

C38 is a Zn(2+) binding site. Catalysis depends on charge relay system residues T40 and H43. The Zn(2+) site is built by H63, E64, C93, C96, C99, and C107. Residues I175, D195, R200, 263 to 265, and 287 to 288 each bind NAD(+); these read LGI and IY.

It belongs to the zinc-containing alcohol dehydrogenase family. As to quaternary structure, homotetramer. It depends on Zn(2+) as a cofactor.

The protein localises to the cytoplasm. It catalyses the reaction L-threonine + NAD(+) = (2S)-2-amino-3-oxobutanoate + NADH + H(+). The protein operates within amino-acid degradation; L-threonine degradation via oxydo-reductase pathway; glycine from L-threonine: step 1/2. In terms of biological role, catalyzes the NAD(+)-dependent oxidation of L-threonine to 2-amino-3-ketobutyrate. This Deinococcus radiodurans (strain ATCC 13939 / DSM 20539 / JCM 16871 / CCUG 27074 / LMG 4051 / NBRC 15346 / NCIMB 9279 / VKM B-1422 / R1) protein is L-threonine 3-dehydrogenase.